We begin with the raw amino-acid sequence, 246 residues long: UPF0309 protein TTE0306 (246 aa).

Residues 31–212 (ITESLISEDS…EAEIITNMLE (182 aa)) enclose the SIS domain.

This sequence belongs to the UPF0309 family.

This is UPF0309 protein TTE0306 from Caldanaerobacter subterraneus subsp. tengcongensis (strain DSM 15242 / JCM 11007 / NBRC 100824 / MB4) (Thermoanaerobacter tengcongensis).